The chain runs to 862 residues: Rab GTPase-binding effector protein 1 (862 aa).

Position 2 is an N-acetylalanine (alanine 2). Positions 11-328 (DVSLQQRVAE…KDQEEDEQQR (318 aa)) form a coiled coil. Position 282 is an N6-acetyllysine (lysine 282). 2 disordered regions span residues 315 to 340 (ELKK…KIDT) and 355 to 374 (EESS…THGS). Phosphoserine occurs at positions 374, 377, and 407. Phosphothreonine is present on threonine 408. Serine 410 carries the phosphoserine modification. Positions 534-816 (DMCSNYEKQL…LQTELDVSEQ (283 aa)) form a coiled coil.

Belongs to the rabaptin family. Heterodimer with RABGEF1. The heterodimer binds RAB4A and RAB5A that have been activated by GTP-binding. Interacts with TSC2. Interacts with GGA1 (via GAE domain), GGA2 (via GAE domain) and GGA3 (via GAE domain). Interacts with AP1G1 (via GAE domain). Interacts with AP1G2 (via GAE domain). Interacts with ECPAS. Interacts with KCNH1. Interacts with PKD1 (via C-terminal domain) and GGA1; the interactions recruit PKD1:PKD2 complex to GGA1 and ARL3 at trans-Golgi network. Interacts with KCNH1. Post-translationally, proteolytic cleavage by caspases in apoptotic cells causes loss of endosome fusion activity.

It localises to the cytoplasm. It is found in the early endosome. Its subcellular location is the recycling endosome. The protein localises to the cytoplasmic vesicle. Rab effector protein acting as linker between gamma-adaptin, RAB4A and RAB5A. Involved in endocytic membrane fusion and membrane trafficking of recycling endosomes. Involved in KCNH1 channels trafficking to and from the cell membrane. Stimulates RABGEF1 mediated nucleotide exchange on RAB5A. Mediates the traffic of PKD1:PKD2 complex from the endoplasmic reticulum through the Golgi to the cilium. The chain is Rab GTPase-binding effector protein 1 (Rabep1) from Rattus norvegicus (Rat).